The chain runs to 398 residues: Carbamoyl phosphate synthase small chain (398 aa).

The CPSase stretch occupies residues 1–199 (MTPAWATEKP…WNEGFGEQAE (199 aa)). Residues S54, G251, and G253 each contribute to the L-glutamine site. Residues 203–391 (HVVAIDYGVK…VNLIREKRGE (189 aa)) enclose the Glutamine amidotransferase type-1 domain. C280 acts as the Nucleophile in catalysis. 5 residues coordinate L-glutamine: L281, Q284, N322, G324, and F325. Active-site residues include H364 and E366.

It belongs to the CarA family. In terms of assembly, composed of two chains; the small (or glutamine) chain promotes the hydrolysis of glutamine to ammonia, which is used by the large (or ammonia) chain to synthesize carbamoyl phosphate. Tetramer of heterodimers (alpha,beta)4.

The enzyme catalyses hydrogencarbonate + L-glutamine + 2 ATP + H2O = carbamoyl phosphate + L-glutamate + 2 ADP + phosphate + 2 H(+). It carries out the reaction L-glutamine + H2O = L-glutamate + NH4(+). The protein operates within amino-acid biosynthesis; L-arginine biosynthesis; carbamoyl phosphate from bicarbonate: step 1/1. It participates in pyrimidine metabolism; UMP biosynthesis via de novo pathway; (S)-dihydroorotate from bicarbonate: step 1/3. Small subunit of the glutamine-dependent carbamoyl phosphate synthetase (CPSase). CPSase catalyzes the formation of carbamoyl phosphate from the ammonia moiety of glutamine, carbonate, and phosphate donated by ATP, constituting the first step of 2 biosynthetic pathways, one leading to arginine and/or urea and the other to pyrimidine nucleotides. The small subunit (glutamine amidotransferase) binds and cleaves glutamine to supply the large subunit with the substrate ammonia. The polypeptide is Carbamoyl phosphate synthase small chain (Mesorhizobium japonicum (strain LMG 29417 / CECT 9101 / MAFF 303099) (Mesorhizobium loti (strain MAFF 303099))).